The primary structure comprises 256 residues: Ras-related protein Rab-26 (256 aa).

Residues 1-53 form a disordered region; sequence MSRKKTPKSKAGSAPATSALPAANGPRPVRPGTARPGPEAPPNGPPQPGRSSV. The span at 38–48 shows a compositional bias: pro residues; the sequence is PEAPPNGPPQP. GTP is bound by residues S72, G73, V74, G75, K76, T77, C78, S95, and T96. Residue T77 coordinates Mg(2+). 2 consecutive short sequence motifs (switch) follow at residues 86-101 and 119-136; these read GAFL…GIDF and DTAG…YYRD. Mg(2+)-binding residues include T96 and D119. GTP is bound by residues G122, N177, K178, D180, A208, and K209. 2 S-geranylgeranyl cysteine lipidation sites follow: C253 and C254.

The protein belongs to the small GTPase superfamily. Rab family. Mg(2+) is required as a cofactor.

The protein localises to the cell membrane. The enzyme catalyses GTP + H2O = GDP + phosphate + H(+). Regulated by guanine nucleotide exchange factors (GEFs) which promote the exchange of bound GDP for free GTP. Regulated by GTPase activating proteins (GAPs) which increase the GTP hydrolysis activity. Inhibited by GDP dissociation inhibitors (GDIs). Functionally, the small GTPases Rab are key regulators of intracellular membrane trafficking, from the formation of transport vesicles to their fusion with membranes. Rabs cycle between an inactive GDP-bound form and an active GTP-bound form that is able to recruit to membranes different set of downstream effectors directly responsible for vesicle formation, movement, tethering and fusion. RAB26 mediates transport of ADRA2A and ADRA2B from the Golgi to the cell membrane. Plays a role in the maturation of zymogenic granules and in pepsinogen secretion in the stomach. Plays a role in the secretion of amylase from acinar granules in the parotid gland. The sequence is that of Ras-related protein Rab-26 (RAB26) from Bos taurus (Bovine).